Consider the following 138-residue polypeptide: Large ribosomal subunit protein uL16 (138 aa).

Residues 1–17 (MLIPRKVKHRKQHHPRQ) are compositionally biased toward basic residues. Residues 1-24 (MLIPRKVKHRKQHHPRQRGIASGG) are disordered.

This sequence belongs to the universal ribosomal protein uL16 family. As to quaternary structure, part of the 50S ribosomal subunit.

In terms of biological role, binds 23S rRNA and is also seen to make contacts with the A and possibly P site tRNAs. The sequence is that of Large ribosomal subunit protein uL16 from Mycolicibacterium gilvum (strain PYR-GCK) (Mycobacterium gilvum (strain PYR-GCK)).